Here is a 655-residue protein sequence, read N- to C-terminus: Probable alpha-galactosidase D (655 aa).

Positions 1–16 (MLPKIFYLSLLPAALG) are cleaved as a signal peptide. N-linked (GlcNAc...) asparagine glycosylation is found at asparagine 47 and asparagine 91. A disulfide bond links cysteine 124 and cysteine 155. Aspartate 153 serves as the catalytic Nucleophile. 2 N-linked (GlcNAc...) asparagine glycosylation sites follow: asparagine 180 and asparagine 189. Residue 198-202 (EWGID) participates in substrate binding. Aspartate 220 functions as the Proton donor in the catalytic mechanism. N-linked (GlcNAc...) asparagine glycosylation is found at asparagine 349, asparagine 436, asparagine 458, asparagine 503, asparagine 537, asparagine 541, and asparagine 580.

The protein belongs to the glycosyl hydrolase 27 family.

It is found in the secreted. It catalyses the reaction Hydrolysis of terminal, non-reducing alpha-D-galactose residues in alpha-D-galactosides, including galactose oligosaccharides, galactomannans and galactolipids.. Hydrolyzes a variety of simple alpha-D-galactoside as well as more complex molecules such as oligosaccharides and polysaccharides. In Aspergillus flavus (strain ATCC 200026 / FGSC A1120 / IAM 13836 / NRRL 3357 / JCM 12722 / SRRC 167), this protein is Probable alpha-galactosidase D (aglD).